Here is a 331-residue protein sequence, read N- to C-terminus: Aspartate carbamoyltransferase catalytic subunit (331 aa).

Residues Arg55 and Thr56 each contribute to the carbamoyl phosphate site. Residue Lys84 participates in L-aspartate binding. Carbamoyl phosphate-binding residues include Arg105, His133, and Gln136. Residues Arg166 and Arg229 each contribute to the L-aspartate site. 2 residues coordinate carbamoyl phosphate: Leu268 and Pro269.

This sequence belongs to the aspartate/ornithine carbamoyltransferase superfamily. ATCase family. In terms of assembly, heterododecamer (2C3:3R2) of six catalytic PyrB chains organized as two trimers (C3), and six regulatory PyrI chains organized as three dimers (R2).

The catalysed reaction is carbamoyl phosphate + L-aspartate = N-carbamoyl-L-aspartate + phosphate + H(+). Its pathway is pyrimidine metabolism; UMP biosynthesis via de novo pathway; (S)-dihydroorotate from bicarbonate: step 2/3. Functionally, catalyzes the condensation of carbamoyl phosphate and aspartate to form carbamoyl aspartate and inorganic phosphate, the committed step in the de novo pyrimidine nucleotide biosynthesis pathway. The sequence is that of Aspartate carbamoyltransferase catalytic subunit from Alkaliphilus oremlandii (strain OhILAs) (Clostridium oremlandii (strain OhILAs)).